A 113-amino-acid polypeptide reads, in one-letter code: Translation initiation factor 1A (113 aa).

Residues 12 to 87 enclose the S1-like domain; sequence EVIRVPLPEG…KRGDIVYRYT (76 aa).

It belongs to the eIF-1A family.

Its function is as follows. Seems to be required for maximal rate of protein biosynthesis. Enhances ribosome dissociation into subunits and stabilizes the binding of the initiator Met-tRNA(I) to 40 S ribosomal subunits. This chain is Translation initiation factor 1A (eIF1A), found in Pyrococcus abyssi (strain GE5 / Orsay).